Reading from the N-terminus, the 578-residue chain is mRNA-decapping enzyme 1B (578 aa).

Ala-2 is subject to N-acetylalanine. Ser-144 and Ser-145 each carry phosphoserine. 2 disordered regions span residues 187–222 (AICD…PEPQ) and 246–265 (RTFA…TRPV). The segment covering 248–257 (FAHHHHHHHQ) has biased composition (basic residues). Phosphoserine is present on residues Ser-274 and Ser-335. Phosphothreonine is present on Thr-380.

The protein belongs to the DCP1 family. Interacts with DCP1A.

It localises to the cytoplasm. The protein resides in the nucleus. It catalyses the reaction a 5'-end (N(7)-methyl 5'-triphosphoguanosine)-ribonucleoside in mRNA + H2O = N(7)-methyl-GDP + a 5'-end phospho-ribonucleoside in mRNA + 2 H(+). In terms of biological role, may play a role in the degradation of mRNAs, both in normal mRNA turnover and in nonsense-mediated mRNA decay. May remove the 7-methyl guanine cap structure from mRNA molecules, yielding a 5'-phosphorylated mRNA fragment and 7m-GDP. The protein is mRNA-decapping enzyme 1B (Dcp1b) of Mus musculus (Mouse).